A 393-amino-acid polypeptide reads, in one-letter code: Na(+)/H(+) antiporter NhaA (393 aa).

A run of 11 helical transmembrane segments spans residues 14 to 34 (AAGM…NWSV), 60 to 80 (LLLW…GLEV), 96 to 116 (MLPL…FLLF), 125 to 145 (AGWA…LTLL), 155 to 175 (VFLL…IALF), 179 to 199 (QVFW…AYMN), 218 to 238 (VCIL…GFFI), 263 to 283 (FLIV…GIVL), 292 to 312 (LGIA…FSWL), 330 to 350 (IVAV…ITLL), and 362 to 382 (YAKL…YLAL).

This sequence belongs to the NhaA Na(+)/H(+) (TC 2.A.33) antiporter family.

It localises to the cell inner membrane. It catalyses the reaction Na(+)(in) + 2 H(+)(out) = Na(+)(out) + 2 H(+)(in). Its function is as follows. Na(+)/H(+) antiporter that extrudes sodium in exchange for external protons. This is Na(+)/H(+) antiporter NhaA from Pectobacterium atrosepticum (strain SCRI 1043 / ATCC BAA-672) (Erwinia carotovora subsp. atroseptica).